Here is a 75-residue protein sequence, read N- to C-terminus: Guanine nucleotide-binding protein G(I)/G(S)/G(O) subunit gamma-4 (75 aa).

C72 is subject to Cysteine methyl ester. C72 carries the S-geranylgeranyl cysteine lipid modification. The propeptide at 73 to 75 (TIL) is removed in mature form.

Belongs to the G protein gamma family. In terms of assembly, g proteins are composed of 3 units, alpha, beta and gamma. Interacts with beta-1 and beta-2, but not with beta-3. Interacts with KCNK1. Interacts (via C-terminus) with KCNK2/TREK-1 (via N-terminus); this interaction confers ion selectivity to Cl(-) and L-glutamate. In terms of tissue distribution, brain, kidney, pancreas, skeletal muscle and faintly in cardiac muscle.

It localises to the cell membrane. Guanine nucleotide-binding proteins (G proteins) are involved as a modulator or transducer in various transmembrane signaling systems. The beta and gamma chains are required for the GTPase activity, for replacement of GDP by GTP, and for G protein-effector interaction. The polypeptide is Guanine nucleotide-binding protein G(I)/G(S)/G(O) subunit gamma-4 (GNG4) (Homo sapiens (Human)).